A 369-amino-acid polypeptide reads, in one-letter code: DNA replication and repair protein RecF (369 aa).

Residue 30 to 37 (GQNGMGKT) participates in ATP binding.

It belongs to the RecF family.

It is found in the cytoplasm. Its function is as follows. The RecF protein is involved in DNA metabolism; it is required for DNA replication and normal SOS inducibility. RecF binds preferentially to single-stranded, linear DNA. It also seems to bind ATP. The protein is DNA replication and repair protein RecF of Bacteroides thetaiotaomicron (strain ATCC 29148 / DSM 2079 / JCM 5827 / CCUG 10774 / NCTC 10582 / VPI-5482 / E50).